A 398-amino-acid chain; its full sequence is Queuine tRNA-ribosyltransferase (398 aa).

D102 functions as the Proton acceptor in the catalytic mechanism. Residues D102–F106, D156, Q205, and G232 each bind substrate. An RNA binding region spans residues G263–D269. Residue D282 is the Nucleophile of the active site. Residues T287–R291 are RNA binding; important for wobble base 34 recognition. Zn(2+) is bound by residues C320, C322, C325, and H362.

Belongs to the queuine tRNA-ribosyltransferase family. In terms of assembly, homodimer. Within each dimer, one monomer is responsible for RNA recognition and catalysis, while the other monomer binds to the replacement base PreQ1. The cofactor is Zn(2+).

It catalyses the reaction 7-aminomethyl-7-carbaguanine + guanosine(34) in tRNA = 7-aminomethyl-7-carbaguanosine(34) in tRNA + guanine. Its pathway is tRNA modification; tRNA-queuosine biosynthesis. Catalyzes the base-exchange of a guanine (G) residue with the queuine precursor 7-aminomethyl-7-deazaguanine (PreQ1) at position 34 (anticodon wobble position) in tRNAs with GU(N) anticodons (tRNA-Asp, -Asn, -His and -Tyr). Catalysis occurs through a double-displacement mechanism. The nucleophile active site attacks the C1' of nucleotide 34 to detach the guanine base from the RNA, forming a covalent enzyme-RNA intermediate. The proton acceptor active site deprotonates the incoming PreQ1, allowing a nucleophilic attack on the C1' of the ribose to form the product. After dissociation, two additional enzymatic reactions on the tRNA convert PreQ1 to queuine (Q), resulting in the hypermodified nucleoside queuosine (7-(((4,5-cis-dihydroxy-2-cyclopenten-1-yl)amino)methyl)-7-deazaguanosine). This Polaromonas sp. (strain JS666 / ATCC BAA-500) protein is Queuine tRNA-ribosyltransferase.